The primary structure comprises 365 residues: Glucan endo-1,3-beta-glucosidase, basic vacuolar isoform (365 aa).

Residues 1–32 form the signal peptide; the sequence is MSTLHKHNTPQMAAITLLGLLLVASSIEIAGA. Residue Glu128 is the Proton donor of the active site. Glu273 functions as the Nucleophile in the catalytic mechanism. A propeptide spans 349–365 (removed in mature form); that stretch reads VSGSVETNATASLISEI. Asn356 carries N-linked (GlcNAc...) asparagine glycosylation.

The protein belongs to the glycosyl hydrolase 17 family.

Its subcellular location is the vacuole. It catalyses the reaction Hydrolysis of (1-&gt;3)-beta-D-glucosidic linkages in (1-&gt;3)-beta-D-glucans.. Its function is as follows. Implicated in the defense of plants against pathogens. This is Glucan endo-1,3-beta-glucosidase, basic vacuolar isoform (GN2) from Nicotiana plumbaginifolia (Leadwort-leaved tobacco).